We begin with the raw amino-acid sequence, 105 residues long: MICOS complex subunit Mic10 (105 aa).

Residues 29 to 46 form a helical membrane-spanning segment; the sequence is LLKVTGGVAIGIVASVAF. The Mitochondrial intermembrane segment spans residues 47-105; it reads FKSRSWPIWFGSGVGLGTGWSNCRHDFASPYVLHGKRVPAGQDSQGKPAYNIITEQHKQ. A disordered region spans residues 85 to 105; sequence PAGQDSQGKPAYNIITEQHKQ.

It belongs to the MICOS complex subunit Mic10 family. In terms of assembly, component of the mitochondrial contact site and cristae organizing system (MICOS) complex.

The protein localises to the mitochondrion inner membrane. In terms of biological role, component of the MICOS complex, a large protein complex of the mitochondrial inner membrane that plays crucial roles in the maintenance of crista junctions, inner membrane architecture, and formation of contact sites to the outer membrane. The sequence is that of MICOS complex subunit Mic10 from Caenorhabditis elegans.